A 156-amino-acid chain; its full sequence is Small ribosomal subunit protein uS7 (156 aa).

Belongs to the universal ribosomal protein uS7 family. Part of the 30S ribosomal subunit. Contacts proteins S9 and S11.

Its function is as follows. One of the primary rRNA binding proteins, it binds directly to 16S rRNA where it nucleates assembly of the head domain of the 30S subunit. Is located at the subunit interface close to the decoding center, probably blocks exit of the E-site tRNA. This chain is Small ribosomal subunit protein uS7, found in Listeria innocua serovar 6a (strain ATCC BAA-680 / CLIP 11262).